We begin with the raw amino-acid sequence, 933 residues long: Phospholipase D2 (933 aa).

Disordered stretches follow at residues 1 to 20 and 134 to 160; these read MAAT…SSQL and SPAP…RRTA. Residues 65-195 enclose the PX domain; sequence VIAQVVGTER…TEFLEVSQLS (131 aa). Residues 203-311 form the PH domain; sequence KGLEGVIRKR…WAQEITELAQ (109 aa). 2 consecutive PLD phosphodiesterase domains span residues 437 to 464 and 751 to 778; these read TLWA…AYGR and ELIY…NDRS. Residues 441-788 form a catalytic region; it reads HHEKLLVVDQ…LLGKRDSELA (348 aa).

Belongs to the phospholipase D family. In terms of assembly, interacts with PIP5K1B. Interacts with EGFR. Phosphorylated by FGR.

The protein localises to the cell membrane. It carries out the reaction a 1,2-diacyl-sn-glycero-3-phosphocholine + H2O = a 1,2-diacyl-sn-glycero-3-phosphate + choline + H(+). The catalysed reaction is 1,2-dihexadecanoyl-sn-glycero-3-phosphocholine + H2O = 1,2-dihexadecanoyl-sn-glycero-3-phosphate + choline + H(+). Functionally, function as phospholipase selective for phosphatidylcholine. May have a role in signal-induced cytoskeletal regulation and/or endocytosis. This chain is Phospholipase D2 (PLD2), found in Bos taurus (Bovine).